An 89-amino-acid polypeptide reads, in one-letter code: Elongation factor 1-beta (89 aa).

This sequence belongs to the EF-1-beta/EF-1-delta family.

In terms of biological role, promotes the exchange of GDP for GTP in EF-1-alpha/GDP, thus allowing the regeneration of EF-1-alpha/GTP that could then be used to form the ternary complex EF-1-alpha/GTP/AAtRNA. This Methanosarcina barkeri (strain Fusaro / DSM 804) protein is Elongation factor 1-beta.